We begin with the raw amino-acid sequence, 107 residues long: Small ribosomal subunit protein uS17 (107 aa).

It belongs to the universal ribosomal protein uS17 family. In terms of assembly, part of the 30S ribosomal subunit.

Functionally, one of the primary rRNA binding proteins, it binds specifically to the 5'-end of 16S ribosomal RNA. The sequence is that of Small ribosomal subunit protein uS17 from Thermotoga maritima (strain ATCC 43589 / DSM 3109 / JCM 10099 / NBRC 100826 / MSB8).